A 266-amino-acid chain; its full sequence is Small ribosomal subunit protein eS1 (266 aa).

The interval 235–266 is disordered; sequence GGAGGAAKASGDDTGAKVERADGYEPPIQETV. A compositionally biased stretch (basic and acidic residues) spans 244-257; that stretch reads SGDDTGAKVERADG.

This sequence belongs to the eukaryotic ribosomal protein eS1 family. As to quaternary structure, component of the small ribosomal subunit. Mature ribosomes consist of a small (40S) and a large (60S) subunit. The 40S subunit contains about 33 different proteins and 1 molecule of RNA (18S). The 60S subunit contains about 49 different proteins and 3 molecules of RNA (28S, 5.8S and 5S).

It localises to the cytoplasm. Its function is as follows. Component of the small ribosomal subunit. The ribosome is a large ribonucleoprotein complex responsible for the synthesis of proteins in the cell. This Oryzias latipes (Japanese rice fish) protein is Small ribosomal subunit protein eS1 (rps3a).